A 277-amino-acid polypeptide reads, in one-letter code: Putative phosphoenolpyruvate synthase regulatory protein (277 aa).

157–164 (GVSRSGKT) is a binding site for ADP.

Belongs to the pyruvate, phosphate/water dikinase regulatory protein family. PSRP subfamily.

The catalysed reaction is [pyruvate, water dikinase] + ADP = [pyruvate, water dikinase]-phosphate + AMP + H(+). It catalyses the reaction [pyruvate, water dikinase]-phosphate + phosphate + H(+) = [pyruvate, water dikinase] + diphosphate. In terms of biological role, bifunctional serine/threonine kinase and phosphorylase involved in the regulation of the phosphoenolpyruvate synthase (PEPS) by catalyzing its phosphorylation/dephosphorylation. This chain is Putative phosphoenolpyruvate synthase regulatory protein, found in Vibrio cholerae serotype O1 (strain ATCC 39541 / Classical Ogawa 395 / O395).